A 266-amino-acid polypeptide reads, in one-letter code: MFPELNNLLSITPDRTEQGKLTLLCDAKTDGSFLVHHFLSFYLKANCKVCFVALVQSFSHYNIVGQKLGVSLTAARERGQLVFLEGLKSSVEVLFHSQEEPHPLQFLREAGAGNLQSLYTFIQDTLKPADSGESPWKCPVLLVDNLSVLLSLGVGAVAVLDFMQYCRATVCCELKGNVVALVHDTEGAEDEENNILLNGLSHQSHLILRTQGLATGFCKDVHGQLSILWRRSSQPTAQRARSLTYQYKIQDKNVSFFAKGMSRAVL.

The protein belongs to the ELP6 family. In terms of assembly, component of the elongator complex which consists of ELP1, ELP2, ELP3, ELP4, ELP5 and ELP6.

It localises to the cytoplasm. The protein resides in the nucleus. It functions in the pathway tRNA modification; 5-methoxycarbonylmethyl-2-thiouridine-tRNA biosynthesis. Component of the elongator complex which is required for multiple tRNA modifications, including mcm5U (5-methoxycarbonylmethyl uridine), mcm5s2U (5-methoxycarbonylmethyl-2-thiouridine), and ncm5U (5-carbamoylmethyl uridine). The elongator complex catalyzes formation of carboxymethyluridine in the wobble base at position 34 in tRNAs. Involved in cell migration. The protein is Elongator complex protein 6 (Elp6) of Rattus norvegicus (Rat).